Reading from the N-terminus, the 283-residue chain is Release factor glutamine methyltransferase (283 aa).

S-adenosyl-L-methionine-binding positions include 121-125 (GTGSG), aspartate 144, and asparagine 188. 188-191 (NPPY) contributes to the substrate binding site.

The protein belongs to the protein N5-glutamine methyltransferase family. PrmC subfamily.

The catalysed reaction is L-glutaminyl-[peptide chain release factor] + S-adenosyl-L-methionine = N(5)-methyl-L-glutaminyl-[peptide chain release factor] + S-adenosyl-L-homocysteine + H(+). In terms of biological role, methylates the class 1 translation termination release factors RF1/PrfA and RF2/PrfB on the glutamine residue of the universally conserved GGQ motif. In Bacillus anthracis, this protein is Release factor glutamine methyltransferase.